The following is a 227-amino-acid chain: Cytochrome c oxidase subunit 2 (227 aa).

Over 1–14 (MAYPFQLGFQDATS) the chain is Mitochondrial intermembrane. A helical transmembrane segment spans residues 15-45 (PIMEELLHFHDHTLMIVFLISSLVLYIITLM). Residues 46 to 59 (LTTKLTHTSTMDAQ) lie on the Mitochondrial matrix side of the membrane. The helical transmembrane segment at 60 to 87 (EVETVWTILPAIILILIALPSLRILYMM) threads the bilayer. Residues 88–227 (DEVNNPSLTV…FFEKWSASML (140 aa)) are Mitochondrial intermembrane-facing. Positions 161, 196, 198, 200, 204, and 207 each coordinate Cu cation. Glu198 provides a ligand contact to Mg(2+).

It belongs to the cytochrome c oxidase subunit 2 family. In terms of assembly, component of the cytochrome c oxidase (complex IV, CIV), a multisubunit enzyme composed of 14 subunits. The complex is composed of a catalytic core of 3 subunits MT-CO1, MT-CO2 and MT-CO3, encoded in the mitochondrial DNA, and 11 supernumerary subunits COX4I, COX5A, COX5B, COX6A, COX6B, COX6C, COX7A, COX7B, COX7C, COX8 and NDUFA4, which are encoded in the nuclear genome. The complex exists as a monomer or a dimer and forms supercomplexes (SCs) in the inner mitochondrial membrane with NADH-ubiquinone oxidoreductase (complex I, CI) and ubiquinol-cytochrome c oxidoreductase (cytochrome b-c1 complex, complex III, CIII), resulting in different assemblies (supercomplex SCI(1)III(2)IV(1) and megacomplex MCI(2)III(2)IV(2)). Found in a complex with TMEM177, COA6, COX18, COX20, SCO1 and SCO2. Interacts with TMEM177 in a COX20-dependent manner. Interacts with COX20. Interacts with COX16. It depends on Cu cation as a cofactor.

The protein localises to the mitochondrion inner membrane. The enzyme catalyses 4 Fe(II)-[cytochrome c] + O2 + 8 H(+)(in) = 4 Fe(III)-[cytochrome c] + 2 H2O + 4 H(+)(out). Its function is as follows. Component of the cytochrome c oxidase, the last enzyme in the mitochondrial electron transport chain which drives oxidative phosphorylation. The respiratory chain contains 3 multisubunit complexes succinate dehydrogenase (complex II, CII), ubiquinol-cytochrome c oxidoreductase (cytochrome b-c1 complex, complex III, CIII) and cytochrome c oxidase (complex IV, CIV), that cooperate to transfer electrons derived from NADH and succinate to molecular oxygen, creating an electrochemical gradient over the inner membrane that drives transmembrane transport and the ATP synthase. Cytochrome c oxidase is the component of the respiratory chain that catalyzes the reduction of oxygen to water. Electrons originating from reduced cytochrome c in the intermembrane space (IMS) are transferred via the dinuclear copper A center (CU(A)) of subunit 2 and heme A of subunit 1 to the active site in subunit 1, a binuclear center (BNC) formed by heme A3 and copper B (CU(B)). The BNC reduces molecular oxygen to 2 water molecules using 4 electrons from cytochrome c in the IMS and 4 protons from the mitochondrial matrix. The protein is Cytochrome c oxidase subunit 2 (MT-CO2) of Balaenoptera musculus (Blue whale).